The following is a 361-amino-acid chain: Caffeic acid 3-O-methyltransferase 1 (361 aa).

128–134 (MNQDKVL) contributes to the substrate binding site. A substrate binding region spans residues 160-178 (AFEYHGTDPRFNKVFNQGM). The S-adenosyl-L-methionine site is built by G206, D229, D249, M250, and K263. The Proton acceptor role is filled by H267.

This sequence belongs to the class I-like SAM-binding methyltransferase superfamily. Cation-independent O-methyltransferase family. COMT subfamily. As to quaternary structure, homodimer.

The catalysed reaction is (E)-caffeate + S-adenosyl-L-methionine = (E)-ferulate + S-adenosyl-L-homocysteine + H(+). It participates in aromatic compound metabolism; phenylpropanoid biosynthesis. Functionally, catalyzes the conversion of caffeic acid to ferulic acid and of 5-hydroxyferulic acid to sinapic acid. The resulting products may subsequently be converted to the corresponding alcohols that are incorporated into lignins. This chain is Caffeic acid 3-O-methyltransferase 1 (COMT1), found in Ocimum basilicum (Sweet basil).